The primary structure comprises 849 residues: MKQTLKDFSNLLLVVLCDYVLGEAEHLVLGEPGHVALSNSTVTVDFHGANGTLRNVSVLLVEASSNQTLTTKYLLTNQSQGTLEFECFYFKEAGDYWFVMTREATNSSLPVPPRERSAFLKVEWPVFHVDLSRTSMAAEGTFQVGLFTSQPLCPFPGDKPDILLEVTFTNSLPEARAGQALPLEIRASKRVELAQGQWVEFDCPPVGPEAYVTVTVVLKLLGRDSVIMSTGPIDLAQKFGYKLVMEPELTCEAGVEVTVLPPPCIFVQGVIAVFKEAPRLPGERTNRLAENSLALGERRTGFNCTLFDMGRNKYCFDFGVSSQSQFSAKEKECMLIRRSIETWGLWQPWSQCSASCGDGVRERRRVCLTSSPSRPGCPGMSSETSPCSLEDCAAFQPSSPSPLQPQAPVKSNNVVTVTGISLCLFIIVATVLITLWRKLGRAPKCSTPARHNSLHGPGCRKNSDEENICELSEPRGSFSDAGDGPAGSPGDPGIPLTYRRSVPAPPDDEASGSESFQANAQKIIPPLFSYRLAQQQLKEMKKKGLTETTKVYHVSQSPLTDTAIDAAATAAAAAAASPGGSESPEEAAAGKFRIKSPFLEHPPTVGAGDRPPSRLDHPFSAASCAVSPSQTLLRKSQVRSHSRGSHFRRTASFHEARQARPFRERSLSTLTPRPTPAHGPRARTWDQAGERGRPPSRGTALFPEKRDHGPGAAGASGPLSPLPKPHSLGPPPRKPDLGDRQAGFVGAGERPEPPRARRGPSPSHRSVSRKQPSPPAPKDGYQRVSPLSPSQGRKDKCQSFPAHPEFAFYDNTSFGLTEAEQRMLDLPGYFGSNEEDETTSTLSVEKLVI.

A signal peptide spans 1–24 (MKQTLKDFSNLLLVVLCDYVLGEA). Over 25 to 413 (EHLVLGEPGH…QPQAPVKSNN (389 aa)) the chain is Extracellular. N-linked (GlcNAc...) asparagine glycosylation is found at N39, N50, N55, N66, N77, N106, and N303. Residues 340 to 393 (IETWGLWQPWSQCSASCGDGVRERRRVCLTSSPSRPGCPGMSSETSPCSLEDCA) form the TSP type-1 domain. Intrachain disulfides connect C352-C387, C356-C392, and C367-C377. Residues 414 to 434 (VVTVTGISLCLFIIVATVLIT) traverse the membrane as a helical segment. The Cytoplasmic segment spans residues 435–849 (LWRKLGRAPK…STLSVEKLVI (415 aa)). S463 carries the phosphoserine modification. Disordered stretches follow at residues 472–516 (SEPR…SESF), 595–799 (KSPF…KCQS), and 828–849 (GYFG…KLVI). Over residues 479–493 (SDAGDGPAGSPGDPG) the composition is skewed to low complexity. Over residues 636 to 651 (SQVRSHSRGSHFRRTA) the composition is skewed to basic residues. The segment covering 652–666 (SFHEARQARPFRERS) has biased composition (basic and acidic residues). A compositionally biased stretch (pro residues) spans 720 to 732 (SPLPKPHSLGPPP).

Part of a complex composed of THSD1, PTK2/FAK1, TLN1 and VCL. Interacts with TLN1.

It is found in the endosome membrane. Its subcellular location is the cell junction. The protein resides in the focal adhesion. Is a positive regulator of nascent focal adhesion assembly, involved in the modulation of endothelial cell attachment to the extracellular matrix. This chain is Thrombospondin type-1 domain-containing protein 1 (THSD1), found in Bos taurus (Bovine).